Consider the following 116-residue polypeptide: Non-specific lipid-transfer protein C, cotyledon-specific isoform (116 aa).

The N-terminal stretch at 1-24 is a signal peptide; sequence MKNVVFSVLLLLSFLFCLANTNEA. Disulfide bonds link Cys28–Cys76, Cys38–Cys53, Cys54–Cys98, and Cys74–Cys112.

It belongs to the plant LTP family.

Its function is as follows. Plant non-specific lipid-transfer proteins transfer phospholipids as well as galactolipids across membranes. May play a role in wax or cutin deposition in the cell walls of expanding epidermal cells and certain secretory tissues. The sequence is that of Non-specific lipid-transfer protein C, cotyledon-specific isoform from Ricinus communis (Castor bean).